The primary structure comprises 122 residues: Selenoprotein H (122 aa).

Residue K20 is modified to N6-acetyllysine. The segment at residues 41-44 is a cross-link (cysteinyl-selenocysteine (Cys-Sec); redox-active); it reads CTSU. Residue U44 is a non-standard amino acid, selenocysteine.

It belongs to the SelWTH family.

Its function is as follows. May be involved in a redox-related process. In Macaca fascicularis (Crab-eating macaque), this protein is Selenoprotein H.